We begin with the raw amino-acid sequence, 312 residues long: MAKMKCAIIGSGNIGTDLMIKLLKGSDTLELAAVVGIDPASEGLAMASERGVPTTHEGIEGLCRMPQYADIGIAFDATSAYAHKAHDEILARDGKLMVDLTPAAIGPATIPPVNPAVDAAVRNINMVTCGGQATIPIVAAVSQVAKVHYAEIVASVSSRSAGPGTRANIDEFTRTTARAIETVGGAAKGRAVIILNPAEPPMIMRDTIFTLSEMVDEDKVRDSVLAMIARVQSYVPGYRLKQEVQFERFGSNRPLKIPGYGEFEGLKTSVFLEVEGAGDYLPNYSGNLDIMTAAAKAAGESLAKTHMEKTAA.

11–14 (SGNI) is a binding site for NAD(+). The active-site Acyl-thioester intermediate is Cys-129. NAD(+)-binding positions include 160–168 (SAGPGTRAN) and Asn-287.

This sequence belongs to the acetaldehyde dehydrogenase family.

It catalyses the reaction acetaldehyde + NAD(+) + CoA = acetyl-CoA + NADH + H(+). This Novosphingobium aromaticivorans (strain ATCC 700278 / DSM 12444 / CCUG 56034 / CIP 105152 / NBRC 16084 / F199) protein is Acetaldehyde dehydrogenase 2.